The primary structure comprises 841 residues: Alpha-glucan phosphorylase 2, cytosolic (841 aa).

Residues 1–24 (MANANGKAATSLPEKISAKANPEA) form a disordered region. Position 687 is an N6-(pyridoxal phosphate)lysine (Lys-687).

This sequence belongs to the glycogen phosphorylase family. Pyridoxal 5'-phosphate is required as a cofactor.

It is found in the cytoplasm. The enzyme catalyses [(1-&gt;4)-alpha-D-glucosyl](n) + phosphate = [(1-&gt;4)-alpha-D-glucosyl](n-1) + alpha-D-glucose 1-phosphate. Phosphorylase is an important allosteric enzyme in carbohydrate metabolism. Enzymes from different sources differ in their regulatory mechanisms and in their natural substrates. However, all known phosphorylases share catalytic and structural properties. In Arabidopsis thaliana (Mouse-ear cress), this protein is Alpha-glucan phosphorylase 2, cytosolic (PHS2).